We begin with the raw amino-acid sequence, 206 residues long: Shieldin complex subunit 1 (206 aa).

Composition is skewed to polar residues over residues 1–15, 33–43, and 60–69; these read MATQ…TEES, RPSQQTNSEAF, and DSSNLNTEQN. Disordered stretches follow at residues 1–21 and 33–69; these read MATQ…LDLP and RPSQ…TEQN.

Component of the shieldin complex, consisting of SHLD1, SHLD2, SHLD3 and MAD2L2/REV7. Within the complex, SHLD2 forms a scaffold which interacts with a SHLD3-MAD2L2 subcomplex via its N-terminus, and with SHLD1 via its C-terminus. Interacts with ASTE1.

The protein resides in the chromosome. Component of the shieldin complex, which plays an important role in repair of DNA double-stranded breaks (DSBs). During G1 and S phase of the cell cycle, the complex functions downstream of TP53BP1 to promote non-homologous end joining (NHEJ) and suppress DNA end resection. Mediates various NHEJ-dependent processes including immunoglobulin class-switch recombination, and fusion of unprotected telomeres. In Bos taurus (Bovine), this protein is Shieldin complex subunit 1.